A 512-amino-acid chain; its full sequence is Polyamine oxidase 1 (512 aa).

E38 and R46 together coordinate FAD. Residues 448 to 470 (DRMAEPLPRGPDAAADERPPSPR) form a disordered region. E476 lines the FAD pocket.

The protein belongs to the flavin monoamine oxidase family. The cofactor is FAD.

It localises to the cytoplasm. The enzyme catalyses spermine + O2 + H2O = 3-aminopropanal + spermidine + H2O2. It catalyses the reaction N(1)-acetylspermine + O2 + H2O = 3-acetamidopropanal + spermidine + H2O2. The catalysed reaction is norspermine + O2 + H2O = norspermidine + 3-aminopropanal + H2O2. It carries out the reaction thermospermine + O2 + H2O = 3-aminopropanal + spermidine + H2O2. The protein operates within amine and polyamine degradation; spermine degradation. In terms of biological role, flavoenzyme involved in polyamine back-conversion. Catalyzes the oxidation of the secondary amino group of polyamines, such as spermine and its acetyl derivatives. Substrate preference is thermospermine &gt; spermine &gt; norspermine &gt; N(1)-acetylspermine. No activity detected when putrescine or spermidine are used as substrates. Plays an important role in the regulation of polyamine intracellular concentration. The polypeptide is Polyamine oxidase 1 (Oryza sativa subsp. japonica (Rice)).